Reading from the N-terminus, the 543-residue chain is CTP synthase (543 aa).

An amidoligase domain region spans residues Met-1–Leu-265. Position 13 (Ser-13) interacts with CTP. Residue Ser-13 coordinates UTP. ATP is bound at residue Ser-14–Ile-19. Tyr-54 contributes to the L-glutamine binding site. Asp-71 lines the ATP pocket. Positions 71 and 139 each coordinate Mg(2+). Residues Asp-146–Glu-148, Lys-186–Gln-191, and Lys-222 contribute to the CTP site. UTP-binding positions include Lys-186–Gln-191 and Lys-222. The 252-residue stretch at Arg-291 to Leu-542 folds into the Glutamine amidotransferase type-1 domain. Residue Gly-354 coordinates L-glutamine. The active-site Nucleophile; for glutamine hydrolysis is the Cys-381. L-glutamine is bound by residues Phe-382 to Gln-385, Glu-405, and Arg-470. Residues His-515 and Glu-517 contribute to the active site.

This sequence belongs to the CTP synthase family. In terms of assembly, homotetramer.

It carries out the reaction UTP + L-glutamine + ATP + H2O = CTP + L-glutamate + ADP + phosphate + 2 H(+). It catalyses the reaction L-glutamine + H2O = L-glutamate + NH4(+). The catalysed reaction is UTP + NH4(+) + ATP = CTP + ADP + phosphate + 2 H(+). It participates in pyrimidine metabolism; CTP biosynthesis via de novo pathway; CTP from UDP: step 2/2. Its activity is regulated as follows. Allosterically activated by GTP, when glutamine is the substrate; GTP has no effect on the reaction when ammonia is the substrate. The allosteric effector GTP functions by stabilizing the protein conformation that binds the tetrahedral intermediate(s) formed during glutamine hydrolysis. Inhibited by the product CTP, via allosteric rather than competitive inhibition. Its function is as follows. Catalyzes the ATP-dependent amination of UTP to CTP with either L-glutamine or ammonia as the source of nitrogen. Regulates intracellular CTP levels through interactions with the four ribonucleotide triphosphates. The sequence is that of CTP synthase from Gluconacetobacter diazotrophicus (strain ATCC 49037 / DSM 5601 / CCUG 37298 / CIP 103539 / LMG 7603 / PAl5).